Consider the following 298-residue polypeptide: Glutamyl-Q tRNA(Asp) synthetase (298 aa).

L-glutamate is bound by residues 9–13 (RFAPS) and glutamate 45. The short motif at 12–22 (PSPSGELHFGS) is the 'HIGH' region element. Residues cysteine 101, cysteine 103, tyrosine 115, and cysteine 119 each contribute to the Zn(2+) site. L-glutamate is bound by residues tyrosine 172 and arginine 190. The 'KMSKS' region signature appears at 228–232 (KLSKQ). Lysine 231 lines the ATP pocket.

The protein belongs to the class-I aminoacyl-tRNA synthetase family. GluQ subfamily. The cofactor is Zn(2+).

Catalyzes the tRNA-independent activation of glutamate in presence of ATP and the subsequent transfer of glutamate onto a tRNA(Asp). Glutamate is transferred on the 2-amino-5-(4,5-dihydroxy-2-cyclopenten-1-yl) moiety of the queuosine in the wobble position of the QUC anticodon. The polypeptide is Glutamyl-Q tRNA(Asp) synthetase (Salmonella typhimurium (strain LT2 / SGSC1412 / ATCC 700720)).